A 463-amino-acid chain; its full sequence is Chromosomal replication initiator protein DnaA (463 aa).

Positions 1–83 (MSLSLWQQCL…LRFEVGSKPI (83 aa)) are domain I, interacts with DnaA modulators. Residues 83–126 (IVPVAVSSAASSGASVPPAAVRASSLARPSWERVTAQPELSYRS) form a domain II region. The domain III, AAA+ region stretch occupies residues 127–343 (NVNPKHTFDN…GALNRVIANA (217 aa)). Residues Gly171, Gly173, Lys174, and Thr175 each contribute to the ATP site. Residues 344 to 463 (NFTGRAITID…FSNLIRTLSS (120 aa)) form a domain IV, binds dsDNA region.

Belongs to the DnaA family. In terms of assembly, oligomerizes as a right-handed, spiral filament on DNA at oriC.

The protein localises to the cytoplasm. Its function is as follows. Plays an essential role in the initiation and regulation of chromosomal replication. ATP-DnaA binds to the origin of replication (oriC) to initiate formation of the DNA replication initiation complex once per cell cycle. Binds the DnaA box (a 9 base pair repeat at the origin) and separates the double-stranded (ds)DNA. Forms a right-handed helical filament on oriC DNA; dsDNA binds to the exterior of the filament while single-stranded (ss)DNA is stabiized in the filament's interior. The ATP-DnaA-oriC complex binds and stabilizes one strand of the AT-rich DNA unwinding element (DUE), permitting loading of DNA polymerase. After initiation quickly degrades to an ADP-DnaA complex that is not apt for DNA replication. Binds acidic phospholipids. This Edwardsiella ictaluri (strain 93-146) protein is Chromosomal replication initiator protein DnaA.